The following is a 126-amino-acid chain: Type II methyltransferase M.HgiGI (126 aa).

The SAM-dependent MTase C5-type domain occupies 1–126; it reads MKTIDLFAGC…ARLSKIHQQA (126 aa). Residue Cys75 is part of the active site.

This sequence belongs to the class I-like SAM-binding methyltransferase superfamily. C5-methyltransferase family.

The enzyme catalyses a 2'-deoxycytidine in DNA + S-adenosyl-L-methionine = a 5-methyl-2'-deoxycytidine in DNA + S-adenosyl-L-homocysteine + H(+). Its function is as follows. A methylase, recognizes the double-stranded sequence 5'-GRCGYC-3', methylates C-? on both strands, and protects the DNA from cleavage by the HgiEI endonuclease. This Herpetosiphon aurantiacus (Herpetosiphon giganteus) protein is Type II methyltransferase M.HgiGI.